The primary structure comprises 468 residues: UDP-N-acetylmuramate--L-alanine ligase (468 aa).

114 to 120 (GTHGKTT) contributes to the ATP binding site.

The protein belongs to the MurCDEF family.

Its subcellular location is the cytoplasm. The enzyme catalyses UDP-N-acetyl-alpha-D-muramate + L-alanine + ATP = UDP-N-acetyl-alpha-D-muramoyl-L-alanine + ADP + phosphate + H(+). It functions in the pathway cell wall biogenesis; peptidoglycan biosynthesis. Functionally, cell wall formation. This is UDP-N-acetylmuramate--L-alanine ligase from Methylocella silvestris (strain DSM 15510 / CIP 108128 / LMG 27833 / NCIMB 13906 / BL2).